Here is a 229-residue protein sequence, read N- to C-terminus: Ribonuclease 3 (229 aa).

One can recognise an RNase III domain in the interval 7–132; sequence LKAFEGRIGH…VIAAVYLDAG (126 aa). A Mg(2+)-binding site is contributed by glutamate 45. The active site involves aspartate 49. 2 residues coordinate Mg(2+): aspartate 118 and glutamate 121. Glutamate 121 is a catalytic residue. The 70-residue stretch at 157–226 folds into the DRBM domain; sequence DAKTALQEWA…ARALLARMEA (70 aa).

The protein belongs to the ribonuclease III family. Homodimer. Mg(2+) serves as cofactor.

Its subcellular location is the cytoplasm. It carries out the reaction Endonucleolytic cleavage to 5'-phosphomonoester.. Functionally, digests double-stranded RNA. Involved in the processing of primary rRNA transcript to yield the immediate precursors to the large and small rRNAs (23S and 16S). Processes some mRNAs, and tRNAs when they are encoded in the rRNA operon. Processes pre-crRNA and tracrRNA of type II CRISPR loci if present in the organism. In Cereibacter sphaeroides (strain ATCC 17029 / ATH 2.4.9) (Rhodobacter sphaeroides), this protein is Ribonuclease 3.